The primary structure comprises 377 residues: EPS I polysaccharide export outer membrane protein EpsA (377 aa).

An N-terminal signal peptide occupies residues 1–23 (MFVSIPSIRKTVMSLCAVPLMAA). C24 is lipidated: N-palmitoyl cysteine. The S-diacylglycerol cysteine moiety is linked to residue C24.

It belongs to the BexD/CtrA/VexA family.

It localises to the cell outer membrane. Probably involved in polymerization and/or export of exopolysaccharide EPS I which functions as a virulence factor. In Ralstonia solanacearum (Pseudomonas solanacearum), this protein is EPS I polysaccharide export outer membrane protein EpsA (epsA).